The primary structure comprises 158 residues: Sec-independent protein translocase protein TatB (158 aa).

Residues 2-22 form a helical membrane-spanning segment; the sequence is FDGIGFMELLLIGVLGLVVLG. Residues 86–158 form a disordered region; the sequence is LKQAAQSVNR…DTSSNPKANG (73 aa). Composition is skewed to polar residues over residues 88–107, 113–136, and 143–158; these read QAAQ…SQGT, QIHS…QHLT, and EPSQ…KANG.

The protein belongs to the TatB family. As to quaternary structure, the Tat system comprises two distinct complexes: a TatABC complex, containing multiple copies of TatA, TatB and TatC subunits, and a separate TatA complex, containing only TatA subunits. Substrates initially bind to the TatABC complex, which probably triggers association of the separate TatA complex to form the active translocon.

It is found in the cell inner membrane. In terms of biological role, part of the twin-arginine translocation (Tat) system that transports large folded proteins containing a characteristic twin-arginine motif in their signal peptide across membranes. Together with TatC, TatB is part of a receptor directly interacting with Tat signal peptides. TatB may form an oligomeric binding site that transiently accommodates folded Tat precursor proteins before their translocation. The polypeptide is Sec-independent protein translocase protein TatB (Shewanella putrefaciens (strain CN-32 / ATCC BAA-453)).